Consider the following 178-residue polypeptide: Probable inosine/xanthosine triphosphatase (178 aa).

This sequence belongs to the YjjX NTPase family. Homodimer. Requires Mg(2+) as cofactor. The cofactor is Mn(2+).

The catalysed reaction is XTP + H2O = XDP + phosphate + H(+). The enzyme catalyses ITP + H2O = IDP + phosphate + H(+). Its function is as follows. Phosphatase that hydrolyzes non-canonical purine nucleotides such as XTP and ITP to their respective diphosphate derivatives. Probably excludes non-canonical purines from DNA/RNA precursor pool, thus preventing their incorporation into DNA/RNA and avoiding chromosomal lesions. The protein is Probable inosine/xanthosine triphosphatase of Pyrobaculum calidifontis (strain DSM 21063 / JCM 11548 / VA1).